We begin with the raw amino-acid sequence, 207 residues long: Ubiquinol-cytochrome c reductase iron-sulfur subunit (207 aa).

The helical transmembrane segment at 24–44 (LVAATSVVGAVGAGYALVPFV) threads the bilayer. The Rieske domain maps to 100 to 199 (PKLVDPTSEV…HVYLNDTTIL (100 aa)). The [2Fe-2S] cluster site is built by Cys134, His136, Cys162, and His165. A disulfide bridge connects residues Cys139 and Cys164.

In terms of assembly, the main subunits of complex b-c1 are: cytochrome b, cytochrome c1 and the Rieske protein. It depends on [2Fe-2S] cluster as a cofactor.

The protein localises to the cell membrane. The catalysed reaction is a quinol + 2 Fe(III)-[cytochrome c](out) = a quinone + 2 Fe(II)-[cytochrome c](out) + 2 H(+)(out). In terms of biological role, component of the ubiquinol-cytochrome c reductase complex (complex III or cytochrome b-c1 complex), which is a respiratory chain that generates an electrochemical potential coupled to ATP synthesis. This is Ubiquinol-cytochrome c reductase iron-sulfur subunit (petA) from Allochromatium vinosum (strain ATCC 17899 / DSM 180 / NBRC 103801 / NCIMB 10441 / D) (Chromatium vinosum).